Consider the following 367-residue polypeptide: Glutamate 5-kinase (367 aa).

K9 lines the ATP pocket. Substrate-binding residues include S49, D136, and N148. ATP is bound by residues 168–169 and 210–216; these read TD and TGGMKSK. The 75-residue stretch at 276–350 folds into the PUA domain; sequence SGQIEVDAGA…GMQSQDIQVR (75 aa).

Belongs to the glutamate 5-kinase family.

The protein resides in the cytoplasm. It catalyses the reaction L-glutamate + ATP = L-glutamyl 5-phosphate + ADP. The protein operates within amino-acid biosynthesis; L-proline biosynthesis; L-glutamate 5-semialdehyde from L-glutamate: step 1/2. In terms of biological role, catalyzes the transfer of a phosphate group to glutamate to form L-glutamate 5-phosphate. The polypeptide is Glutamate 5-kinase (Bacillus cereus (strain ATCC 14579 / DSM 31 / CCUG 7414 / JCM 2152 / NBRC 15305 / NCIMB 9373 / NCTC 2599 / NRRL B-3711)).